The chain runs to 45 residues: Toxin Bcs III 15.09 (45 aa).

The region spanning 2–44 (QGTACTGEHAHNFCLNGGTCRHIQSLGEYYCICPEGYTGHRCE) is the EGF-like domain. 3 disulfide bridges follow: cysteine 6–cysteine 21, cysteine 15–cysteine 32, and cysteine 34–cysteine 43.

It is found in the secreted. Its subcellular location is the nematocyst. Functionally, has both toxic and EGF activity. The protein is Toxin Bcs III 15.09 of Bunodosoma caissarum (Sea anemone).